A 426-amino-acid chain; its full sequence is Histidine--tRNA ligase (426 aa).

It belongs to the class-II aminoacyl-tRNA synthetase family. In terms of assembly, homodimer.

It localises to the cytoplasm. The enzyme catalyses tRNA(His) + L-histidine + ATP = L-histidyl-tRNA(His) + AMP + diphosphate + H(+). The protein is Histidine--tRNA ligase of Streptococcus equi subsp. zooepidemicus (strain MGCS10565).